A 717-amino-acid polypeptide reads, in one-letter code: Polyribonucleotide nucleotidyltransferase (717 aa).

Residues Asp-486 and Asp-492 each coordinate Mg(2+). A KH domain is found at 553-612; that stretch reads PKIVQLQIDIDKISLVIGSTGKTVKAITDEFEVRVQIEQDGRITLFGTDNLKMQKAKAKI. In terms of domain architecture, S1 motif spans 622–715; that stretch reads GEIYDGIVKK…KFGKIELELA (94 aa). The interval 650–681 is disordered; the sequence is SNRSRSRDDRYGSDIRHSRYSNRNSRYGRDNR. The span at 654–666 shows a compositional bias: basic and acidic residues; the sequence is RSRDDRYGSDIRH.

It belongs to the polyribonucleotide nucleotidyltransferase family. The cofactor is Mg(2+).

The protein localises to the cytoplasm. The enzyme catalyses RNA(n+1) + phosphate = RNA(n) + a ribonucleoside 5'-diphosphate. In terms of biological role, involved in mRNA degradation. Catalyzes the phosphorolysis of single-stranded polyribonucleotides processively in the 3'- to 5'-direction. The protein is Polyribonucleotide nucleotidyltransferase of Borrelia duttonii (strain Ly).